The following is a 359-amino-acid chain: Aspartate carbamoyltransferase catalytic subunit (359 aa).

Carbamoyl phosphate contacts are provided by R52 and T53. Residue K81 participates in L-aspartate binding. Carbamoyl phosphate contacts are provided by R102, H130, and Q133. 2 residues coordinate L-aspartate: R163 and R224. L264 and P265 together coordinate carbamoyl phosphate.

Belongs to the aspartate/ornithine carbamoyltransferase superfamily. ATCase family. Heterododecamer (2C3:3R2) of six catalytic PyrB chains organized as two trimers (C3), and six regulatory PyrI chains organized as three dimers (R2).

The enzyme catalyses carbamoyl phosphate + L-aspartate = N-carbamoyl-L-aspartate + phosphate + H(+). Its pathway is pyrimidine metabolism; UMP biosynthesis via de novo pathway; (S)-dihydroorotate from bicarbonate: step 2/3. Its function is as follows. Catalyzes the condensation of carbamoyl phosphate and aspartate to form carbamoyl aspartate and inorganic phosphate, the committed step in the de novo pyrimidine nucleotide biosynthesis pathway. The polypeptide is Aspartate carbamoyltransferase catalytic subunit (Brachyspira hyodysenteriae (strain ATCC 49526 / WA1)).